Reading from the N-terminus, the 369-residue chain is Glutamate 5-kinase (369 aa).

Residue Lys-9 participates in ATP binding. 3 residues coordinate substrate: Ser-49, Asp-136, and Asn-148. ATP is bound by residues 168 to 169 (TD) and 210 to 216 (TGGMLTK). The PUA domain maps to 275-355 (QGSIWVDKGA…KGVLIYRDDW (81 aa)).

The protein belongs to the glutamate 5-kinase family.

It localises to the cytoplasm. It catalyses the reaction L-glutamate + ATP = L-glutamyl 5-phosphate + ADP. It functions in the pathway amino-acid biosynthesis; L-proline biosynthesis; L-glutamate 5-semialdehyde from L-glutamate: step 1/2. In terms of biological role, catalyzes the transfer of a phosphate group to glutamate to form L-glutamate 5-phosphate. This chain is Glutamate 5-kinase, found in Streptococcus pneumoniae serotype 2 (strain D39 / NCTC 7466).